The primary structure comprises 504 residues: Maturase K (504 aa).

The protein belongs to the intron maturase 2 family. MatK subfamily.

Its subcellular location is the plastid. It localises to the chloroplast. In terms of biological role, usually encoded in the trnK tRNA gene intron. Probably assists in splicing its own and other chloroplast group II introns. This chain is Maturase K, found in Lablab purpureus (Hyacinth bean).